Consider the following 358-residue polypeptide: Acyl-CoA desaturase 1 (358 aa).

At 1–71 the chain is on the cytoplasmic side; it reads MPAHMLQEIS…EGPPPKLEYV (71 aa). Residues 8 to 24 are compositionally biased toward low complexity; that stretch reads EISSSYTTTTTITEPPS. A disordered region spans residues 8–33; sequence EISSSYTTTTTITEPPSGNLQNGREK. Residues 72-92 form a helical membrane-spanning segment; sequence WRNIILMALLHVGALYGITLI. A substrate-binding site is contributed by asparagine 74. Residues 93–96 lie on the Lumenal side of the membrane; that stretch reads PSSK. A helical membrane pass occupies residues 97-117; it reads VYTLLWGIFYYLISALGITAG. Over 118–216 the chain is Cytoplasmic; it reads AHRLWSHRTY…EKLVMFQRRY (99 aa). Residues histidine 119 and histidine 124 each coordinate Fe cation. Residues 119–124 carry the Histidine box-1 motif; sequence HRLWSH. The substrate site is built by asparagine 147, arginine 154, and aspartate 155. Residues histidine 156, histidine 159, and histidine 160 each contribute to the Fe cation site. The Histidine box-2 motif lies at 156–160; the sequence is HRAHH. The substrate site is built by arginine 187 and lysine 188. A helical membrane pass occupies residues 217 to 236; sequence YKPGLLLMCFILPTLVPWYC. Residues 237 to 240 lie on the Lumenal side of the membrane; it reads WGET. The chain crosses the membrane as a helical span at residues 241–262; it reads FLHSLFVSTFLRYTLVLNATWL. Tryptophan 261 serves as a coordination point for substrate. Over 263 to 358 the chain is Cytoplasmic; that stretch reads VNSAAHLYGY…RTGDGSHKSS (96 aa). 4 residues coordinate Fe cation: histidine 268, histidine 297, histidine 300, and histidine 301. The Histidine box-3 motif lies at 297 to 301; sequence HNYHH.

This sequence belongs to the fatty acid desaturase type 1 family. Fe(2+) serves as cofactor. In terms of tissue distribution, detected in liver (at protein level). Detected in adipose tissue. Detected in liver when rats are kept on a fat-free diet, but not when their food contains unsaturated fatty acids.

Its subcellular location is the endoplasmic reticulum membrane. It is found in the membrane. The catalysed reaction is octadecanoyl-CoA + 2 Fe(II)-[cytochrome b5] + O2 + 2 H(+) = (9Z)-octadecenoyl-CoA + 2 Fe(III)-[cytochrome b5] + 2 H2O. Its function is as follows. Stearoyl-CoA desaturase that utilizes O(2) and electrons from reduced cytochrome b5 to introduce the first double bond into saturated fatty acyl-CoA substrates. Catalyzes the insertion of a cis double bond at the Delta-9 position into fatty acyl-CoA substrates including palmitoyl-CoA and stearoyl-CoA. Gives rise to a mixture of 16:1 and 18:1 unsaturated fatty acids. Plays an important role in lipid biosynthesis. Plays an important role in regulating the expression of genes that are involved in lipogenesis and in regulating mitochondrial fatty acid oxidation. Plays an important role in body energy homeostasis. Contributes to the biosynthesis of membrane phospholipids, cholesterol esters and triglycerides. Required for normal development of sebaceous glands. Required for the biosynthesis of normal levels of Delta-9 unsaturated fatty acids and 1-alkyl-2,3-diacylglycerol in the Harderian gland. Required for normal production of meibum, an oily material that prevents drying of the cornea. In Rattus norvegicus (Rat), this protein is Acyl-CoA desaturase 1 (Scd1).